The sequence spans 194 residues: WASH complex subunit 3 (194 aa).

Residue M1 is modified to N-acetylmethionine. A coiled-coil region spans residues 46–74 (TVCEEKLADLSLRIQQIETTLNILDAKLS). Disordered regions lie at residues 93–121 (SVTN…QESE) and 159–194 (EGLD…SFSD). A compositionally biased stretch (polar residues) spans 103 to 121 (TSEQPQQNSTQDSGLQESE).

The protein belongs to the CCDC53 family. Component of the WASH core complex also described as WASH regulatory complex (SHRC) composed of WASH (WASHC1, WASH2P or WASH3P), WASHC2 (WASHC2A or WASHC2C), WASHC3, WASHC4 and WASHC5. The WASH core complex associates via WASHC2 with the F-actin-capping protein dimer (formed by CAPZA1, CAPZA2 or CAPZA3 and CAPZB) in a transient or substoichiometric manner which was initially described as WASH complex.

It localises to the early endosome. Functionally, acts as a component of the WASH core complex that functions as a nucleation-promoting factor (NPF) at the surface of endosomes, where it recruits and activates the Arp2/3 complex to induce actin polymerization, playing a key role in the fission of tubules that serve as transport intermediates during endosome sorting. In Homo sapiens (Human), this protein is WASH complex subunit 3.